The sequence spans 255 residues: tRNA (guanine-N(1)-)-methyltransferase (255 aa).

S-adenosyl-L-methionine is bound by residues G113 and 133-138 (IGDYVL).

This sequence belongs to the RNA methyltransferase TrmD family. Homodimer.

Its subcellular location is the cytoplasm. It carries out the reaction guanosine(37) in tRNA + S-adenosyl-L-methionine = N(1)-methylguanosine(37) in tRNA + S-adenosyl-L-homocysteine + H(+). Its function is as follows. Specifically methylates guanosine-37 in various tRNAs. The chain is tRNA (guanine-N(1)-)-methyltransferase from Escherichia coli O81 (strain ED1a).